A 152-amino-acid chain; its full sequence is Small heat shock protein HspA (152 aa).

Residues 29-139 (TAGEANYPPC…KPRRIPIDNL (111 aa)) form the sHSP domain.

Belongs to the small heat shock protein (HSP20) family.

This is Small heat shock protein HspA (hspA) from Bradyrhizobium diazoefficiens (strain JCM 10833 / BCRC 13528 / IAM 13628 / NBRC 14792 / USDA 110).